Reading from the N-terminus, the 112-residue chain is Integration host factor subunit alpha (112 aa).

Belongs to the bacterial histone-like protein family. In terms of assembly, heterodimer of an alpha and a beta chain.

This protein is one of the two subunits of integration host factor, a specific DNA-binding protein that functions in genetic recombination as well as in transcriptional and translational control. The sequence is that of Integration host factor subunit alpha from Rhizobium johnstonii (strain DSM 114642 / LMG 32736 / 3841) (Rhizobium leguminosarum bv. viciae).